We begin with the raw amino-acid sequence, 295 residues long: Nucleotide-binding protein Sare_3328 (295 aa).

ATP is bound at residue 19–26 (GVSGGGRS). A GTP-binding site is contributed by 70–73 (DVRS).

The protein belongs to the RapZ-like family.

Displays ATPase and GTPase activities. In Salinispora arenicola (strain CNS-205), this protein is Nucleotide-binding protein Sare_3328.